A 435-amino-acid polypeptide reads, in one-letter code: Trigger factor (435 aa).

The PPIase FKBP-type domain maps to 161-246 (GKRVSIDFVG…VNKVEARELP (86 aa)).

This sequence belongs to the FKBP-type PPIase family. Tig subfamily.

The protein localises to the cytoplasm. It catalyses the reaction [protein]-peptidylproline (omega=180) = [protein]-peptidylproline (omega=0). In terms of biological role, involved in protein export. Acts as a chaperone by maintaining the newly synthesized protein in an open conformation. Functions as a peptidyl-prolyl cis-trans isomerase. The protein is Trigger factor of Vibrio campbellii (strain ATCC BAA-1116).